We begin with the raw amino-acid sequence, 148 residues long: uncharacterized protein (148 aa).

Positions 3–64 (IDDLDRKILS…KLNYEKLGYE (62 aa)) constitute an HTH asnC-type domain. Positions 22–41 (YREIAKKLNVAVGTIYNRIK) form a DNA-binding region, H-T-H motif.

This is an uncharacterized protein from Pyrococcus furiosus (strain ATCC 43587 / DSM 3638 / JCM 8422 / Vc1).